Reading from the N-terminus, the 871-residue chain is DNA mismatch repair protein MutS (871 aa).

630–637 (GPNMGGKS) contacts ATP. The segment at 830–849 (KEEPESKSASPVEAALAGIN) is disordered.

Belongs to the DNA mismatch repair MutS family.

Functionally, this protein is involved in the repair of mismatches in DNA. It is possible that it carries out the mismatch recognition step. This protein has a weak ATPase activity. In Verminephrobacter eiseniae (strain EF01-2), this protein is DNA mismatch repair protein MutS.